We begin with the raw amino-acid sequence, 586 residues long: Putative butyrophilin subfamily 2 member A3 (586 aa).

A signal peptide spans 1 to 27; it reads MEPAAALHFSRPASLLLLLSLCALVSA. Residues 28 to 139 form the Ig-like V-type domain; sequence QVTVVGPTDP…SCNEAILHLV (112 aa). Topologically, residues 28–246 are extracellular; it reads QVTVVGPTDP…SFMPSRSPCV (219 aa). N-linked (GlcNAc...) asparagine glycosylation is found at Asn-45, Asn-112, Asn-214, and Asn-220. An intrachain disulfide couples Cys-50 to Cys-123. A helical membrane pass occupies residues 247–267; sequence VILPVIMIILMIPIAICIYWI. Residues 268-586 are Cytoplasmic-facing; that stretch reads NNLQKEKKDS…VPQLPARKKV (319 aa). A B30.2/SPRY domain is found at 281–474; it reads TFNLCLSLAG…ILICSAFTGA (194 aa).

This sequence belongs to the immunoglobulin superfamily. BTN/MOG family.

The protein localises to the membrane. The polypeptide is Putative butyrophilin subfamily 2 member A3 (BTN2A3P) (Homo sapiens (Human)).